We begin with the raw amino-acid sequence, 227 residues long: Translation initiation factor 6 (227 aa).

Belongs to the eIF-6 family.

Binds to the 50S ribosomal subunit and prevents its association with the 30S ribosomal subunit to form the 70S initiation complex. The sequence is that of Translation initiation factor 6 from Pyrococcus abyssi (strain GE5 / Orsay).